Here is a 306-residue protein sequence, read N- to C-terminus: MDFISIEQLVSGERVDRKALEFGRGVPDPGGWPSGWTLGPQEAVAREKLKLEEEKRKKLERFNSSRLTLDNLTDLENLVQRRRKKRQRHKVPPREPESGAEPQPQVPLEPVGLEMFLKAAAENQEALIDKYLADGGDPNAHDKLHRTALHWACLKGHRQLVNKLLAAGAAIEVRDLLDRTPVFWACRGGHLDILKRLLNQGAQVNAQDKIWSTPLHVAVRMGHSDCLEHLIECGAHINAQDKEGDTALHEAVRYGHHKATKLLLLYGAKLGVKNVASQTPVQLARDWQRGIRDALQAHVGHPRTRC.

The stretch at 41-90 (QEAVAREKLKLEEEKRKKLERFNSSRLTLDNLTDLENLVQRRRKKRQRHK) forms a coiled coil. Positions 78-107 (LVQRRRKKRQRHKVPPREPESGAEPQPQVP) are disordered. A compositionally biased stretch (basic residues) spans 80 to 91 (QRRRKKRQRHKV). ANK repeat units lie at residues 144–173 (LHRT…AIEV), 177–206 (LDRT…QVNA), 210–239 (IWST…HINA), and 243–272 (EGDT…KLGV). The interaction with TTN stretch occupies residues 179 to 196 (RTPVFWACRGGHLDILKR).

Interacts with titin/TTN and MYPN.

The protein localises to the nucleus. In terms of biological role, may be involved in the energy metabolism. Could be a molecular link between myofibrillar stretch-induced signaling pathways and muscle gene expression. The protein is Ankyrin repeat domain-containing protein 23 (Ankrd23) of Mus musculus (Mouse).